Consider the following 279-residue polypeptide: MSKADFIFKKNIKKILTDGVWSEQARPKYKNGKTANSKYITGAFAEYDLAKGEFPITTLRPIAIKSAIKEVFWIYQDQTNELAILNDKYGVRYWNDWEVKQTGTIGERYGAIVKKHDIMNKILKQLEENPWNRRNVISLWDYEAFEKTEGLLPCAFQIMFDVRRVKGEIYLDATLTQRSNDMLVAHHINAMQYVALQMMIAKHFGWKVGKFFYFVNNLHIYDNQFEQAEELLRREPVVCQPHLVLNVPNKTNFFDIKPEDFELLDYEPVKPQLKFDLAI.

A dUMP-binding site is contributed by 133–134 (RR). Cysteine 154 (nucleophile) is an active-site residue. Residues 178 to 181 (RSND), asparagine 189, and 219 to 221 (HIY) each bind dUMP. Residue aspartate 181 coordinates (6R)-5,10-methylene-5,6,7,8-tetrahydrofolate. Residue alanine 278 participates in (6R)-5,10-methylene-5,6,7,8-tetrahydrofolate binding.

It belongs to the thymidylate synthase family. Bacterial-type ThyA subfamily. Homodimer.

The protein resides in the cytoplasm. It carries out the reaction dUMP + (6R)-5,10-methylene-5,6,7,8-tetrahydrofolate = 7,8-dihydrofolate + dTMP. Its pathway is pyrimidine metabolism; dTTP biosynthesis. Catalyzes the reductive methylation of 2'-deoxyuridine-5'-monophosphate (dUMP) to 2'-deoxythymidine-5'-monophosphate (dTMP) while utilizing 5,10-methylenetetrahydrofolate (mTHF) as the methyl donor and reductant in the reaction, yielding dihydrofolate (DHF) as a by-product. This enzymatic reaction provides an intracellular de novo source of dTMP, an essential precursor for DNA biosynthesis. The chain is Thymidylate synthase from Streptococcus mutans serotype c (strain ATCC 700610 / UA159).